Consider the following 250-residue polypeptide: Triosephosphate isomerase (250 aa).

9–11 (NWK) is a substrate binding site. H95 acts as the Electrophile in catalysis. The active-site Proton acceptor is E167. Substrate is bound by residues G173, S213, and 234-235 (GG).

It belongs to the triosephosphate isomerase family. Homodimer.

Its subcellular location is the cytoplasm. It catalyses the reaction D-glyceraldehyde 3-phosphate = dihydroxyacetone phosphate. It functions in the pathway carbohydrate biosynthesis; gluconeogenesis. The protein operates within carbohydrate degradation; glycolysis; D-glyceraldehyde 3-phosphate from glycerone phosphate: step 1/1. Involved in the gluconeogenesis. Catalyzes stereospecifically the conversion of dihydroxyacetone phosphate (DHAP) to D-glyceraldehyde-3-phosphate (G3P). The polypeptide is Triosephosphate isomerase (Exiguobacterium sibiricum (strain DSM 17290 / CCUG 55495 / CIP 109462 / JCM 13490 / 255-15)).